The primary structure comprises 398 residues: MKINNLPEVFTAALPVLKEINEAGYEAYFVGGSVRDLLLNRHIHDVDIATSAYPMEIKQIFKKTIDTGIKHGTVTVLYEGESYEITTFRTESGYQDFRRPDHVTFVQNLSEDLKRRDFTINALAMDVDGNIIDHFDGLGDLEKHLIRAVGKAENRFHEDALRMMRAVRFMSQLQFTLEPETEQAISDNHELLSKISVERIRDEFVKMGIAPGSQKAFQIFLDTGLSEEVPGFRGKKENLALYPQLNFSPTTEANLWALMIILLKLPNDKIPHFMRMWKNSNAMERQVADIVAFFDLISSHAPNNYDLYKAGLETIVSTIDLAHILGQPVNGSALVDSYEALPIKNNRDLVIDGHFLLKNGIPAGPRVGLLLEEIKKAVLEGVISNNEAAITEFISLNH.

ATP contacts are provided by Gly32 and Arg35. 2 residues coordinate CTP: Gly32 and Arg35. 2 residues coordinate Mg(2+): Asp45 and Asp47. 5 residues coordinate ATP: Arg116, Asp159, Arg162, Arg165, and Arg168. The CTP site is built by Arg116, Asp159, Arg162, Arg165, and Arg168.

The protein belongs to the tRNA nucleotidyltransferase/poly(A) polymerase family. Bacterial CCA-adding enzyme type 3 subfamily. Homodimer. It depends on Mg(2+) as a cofactor.

It carries out the reaction a tRNA precursor + 2 CTP + ATP = a tRNA with a 3' CCA end + 3 diphosphate. It catalyses the reaction a tRNA with a 3' CCA end + 2 CTP + ATP = a tRNA with a 3' CCACCA end + 3 diphosphate. Functionally, catalyzes the addition and repair of the essential 3'-terminal CCA sequence in tRNAs without using a nucleic acid template. Adds these three nucleotides in the order of C, C, and A to the tRNA nucleotide-73, using CTP and ATP as substrates and producing inorganic pyrophosphate. tRNA 3'-terminal CCA addition is required both for tRNA processing and repair. Also involved in tRNA surveillance by mediating tandem CCA addition to generate a CCACCA at the 3' terminus of unstable tRNAs. While stable tRNAs receive only 3'-terminal CCA, unstable tRNAs are marked with CCACCA and rapidly degraded. In Lactobacillus johnsonii (strain CNCM I-12250 / La1 / NCC 533), this protein is CCA-adding enzyme.